Consider the following 279-residue polypeptide: Urease accessory protein UreD (279 aa).

Belongs to the UreD family. As to quaternary structure, ureD, UreF and UreG form a complex that acts as a GTP-hydrolysis-dependent molecular chaperone, activating the urease apoprotein by helping to assemble the nickel containing metallocenter of UreC. The UreE protein probably delivers the nickel.

The protein localises to the cytoplasm. Functionally, required for maturation of urease via the functional incorporation of the urease nickel metallocenter. The polypeptide is Urease accessory protein UreD (Rhodopseudomonas palustris (strain HaA2)).